A 601-amino-acid polypeptide reads, in one-letter code: Methionine--tRNA ligase (601 aa).

Residues 21–31 (PYANGPRHIGH) carry the 'HIGH' region motif. Cys153, Cys156, Cys166, and Cys169 together coordinate Zn(2+). Asn361 serves as a coordination point for ATP.

The protein belongs to the class-I aminoacyl-tRNA synthetase family. MetG type 1 subfamily. In terms of assembly, monomer. Zn(2+) is required as a cofactor.

The protein resides in the cytoplasm. It carries out the reaction tRNA(Met) + L-methionine + ATP = L-methionyl-tRNA(Met) + AMP + diphosphate. In terms of biological role, is required not only for elongation of protein synthesis but also for the initiation of all mRNA translation through initiator tRNA(fMet) aminoacylation. The sequence is that of Methionine--tRNA ligase from Cutibacterium acnes (strain DSM 16379 / KPA171202) (Propionibacterium acnes).